The primary structure comprises 38 residues: Large ribosomal subunit protein bL12 (38 aa).

It belongs to the bacterial ribosomal protein bL12 family. Homodimer. Part of the ribosomal stalk of the 50S ribosomal subunit. Forms a multimeric L10(L12)X complex, where L10 forms an elongated spine to which 2 to 4 L12 dimers bind in a sequential fashion. Binds GTP-bound translation factors.

In terms of biological role, forms part of the ribosomal stalk which helps the ribosome interact with GTP-bound translation factors. Is thus essential for accurate translation. This Salinivibrio costicola (Vibrio costicola) protein is Large ribosomal subunit protein bL12 (rplL).